The primary structure comprises 410 residues: Auxin-induced protein 5NG4 (410 aa).

Residues 1–16 (MASNIMQRCNVFMSER) lie on the Cytoplasmic side of the membrane. A helical membrane pass occupies residues 17–37 (VKLHAAMLALQFGYAGFHIVS). The Extracellular portion of the chain corresponds to 38–47 (RAALNMGVSK). A helical transmembrane segment spans residues 48–68 (VVFPVYRNILALMLIGPCAYF). Residues 69 to 74 (LEKKER) are Cytoplasmic-facing. Residues 75–95 (PALTLSFLIQFFLLALCGITG) form a helical membrane-spanning segment. The Extracellular segment spans residues 96-109 (QSRILSLRIVLHIP). The chain crosses the membrane as a helical span at residues 110 to 130 (TFASAIQNSVPAITFIMAAAL). The Cytoplasmic portion of the chain corresponds to 131–141 (RLEKVHISRRD). The chain crosses the membrane as a helical span at residues 142 to 162 (GLAKIIGTVACVSGATIITLY). At 163–196 (KGPPITHIWRPNLEVTASYFKAFQGNDLSAKSEN) the chain is on the extracellular side. N-linked (GlcNAc...) asparagine glycosylation is present at asparagine 196. A helical membrane pass occupies residues 197–217 (WTLGCIYLLGNCLAWSGWIVL). The 130-residue stretch at 209–338 (LAWSGWIVLQ…IIIGLYLVLW (130 aa)) folds into the EamA domain. Residues 218–229 (QAPVLKRYPARL) are Cytoplasmic-facing. Residues 230 to 250 (SVTSFTCFFGVIQFLIIAAFF) form a helical membrane-spanning segment. Over 251-264 (ETDLEHWKIHSGGE) the chain is Extracellular. The helical transmembrane segment at 265–285 (LFTILYAGFVASGIAFSVQIW) threads the bilayer. The Cytoplasmic portion of the chain corresponds to 286 to 292 (CIDRGGP). A helical membrane pass occupies residues 293–313 (VFVAVYQPVQTIAVAIMASII). At 314–317 (LGEQ) the chain is on the extracellular side. The helical transmembrane segment at 318 to 338 (FYLGGIFGAILIIIGLYLVLW) threads the bilayer. Residues 339 to 410 (GKSEEKRLGL…IPSPSDEPQP (72 aa)) lie on the Cytoplasmic side of the membrane.

Belongs to the drug/metabolite transporter (DMT) superfamily. Plant drug/metabolite exporter (P-DME) (TC 2.A.7.4) family.

It is found in the membrane. The polypeptide is Auxin-induced protein 5NG4 (Pinus taeda (Loblolly pine)).